We begin with the raw amino-acid sequence, 139 residues long: Tetra-peptide repeat homeobox-like protein (139 aa).

Disordered regions lie at residues 1-22 and 78-139; these read MQDPRHPQGLPLSPGLPKRQRQ and ERWF…QQPQ. The homeobox DNA-binding region spans 20–79; that stretch reads QRQDRTIYNWKQQEVLENHFKEEQYPDYDTRQELAEMLNLREYQVQVWFKNRRAKRSRER. Low complexity predominate over residues 82–139; the sequence is QKQLQQLQKHPQQQHPQQQHPQQQLQQQQPQQQPQQQQPQQQPQQQQPQQQQLHQQPQ.

The protein belongs to the paired homeobox family.

Its subcellular location is the nucleus. Its function is as follows. Transcription factor required for zygotic genome activation (ZGA), a critical event in early embryonic development during which the developmental control passes from maternally provided mRNAs to the expression of the zygotic genome after fertilization. Protein produced from maternal transcripts that binds and activates expression of key ZGA marker genes, such as NANOGNB, ZSCAN4, DUXB, KLF5 and DPPA3. Binds to regulatory DNA sequences containing a 5'-TAATCC-3' sequence motif. This Homo sapiens (Human) protein is Tetra-peptide repeat homeobox-like protein.